The sequence spans 436 residues: Trigger factor (436 aa).

A PPIase FKBP-type domain is found at 163–248; it reads GDRATIDFEG…VKKIEAAHLP (86 aa).

Belongs to the FKBP-type PPIase family. Tig subfamily.

It localises to the cytoplasm. It catalyses the reaction [protein]-peptidylproline (omega=180) = [protein]-peptidylproline (omega=0). Its function is as follows. Involved in protein export. Acts as a chaperone by maintaining the newly synthesized protein in an open conformation. Functions as a peptidyl-prolyl cis-trans isomerase. This is Trigger factor from Polaromonas sp. (strain JS666 / ATCC BAA-500).